The primary structure comprises 179 residues: Large ribosomal subunit protein uL5 (179 aa).

This sequence belongs to the universal ribosomal protein uL5 family. As to quaternary structure, part of the 50S ribosomal subunit; part of the 5S rRNA/L5/L18/L25 subcomplex. Contacts the 5S rRNA and the P site tRNA. Forms a bridge to the 30S subunit in the 70S ribosome.

Functionally, this is one of the proteins that bind and probably mediate the attachment of the 5S RNA into the large ribosomal subunit, where it forms part of the central protuberance. In the 70S ribosome it contacts protein S13 of the 30S subunit (bridge B1b), connecting the 2 subunits; this bridge is implicated in subunit movement. Contacts the P site tRNA; the 5S rRNA and some of its associated proteins might help stabilize positioning of ribosome-bound tRNAs. This Vesicomyosocius okutanii subsp. Calyptogena okutanii (strain HA) protein is Large ribosomal subunit protein uL5.